A 531-amino-acid chain; its full sequence is RCC1 and BTB domain-containing protein 1 (531 aa).

RCC1 repeat units lie at residues 40-91 (NDEV…LLTT), 93-145 (DGVV…ALAA), 147-198 (GELF…AVLD), 199-250 (SGEV…ALTD), 252-302 (GLLY…AAKT), and 304-356 (GGHV…FLTV). 2 BTB domains span residues 370-437 (ADLK…DLPP) and 470-499 (ENAFSLFSAAVRYDAEDLEEFCFKFCINHL).

In the retina, mainly expressed in the inner retina with strong signals reaching up to the outer plexiform layer (at protein level).

The protein resides in the nucleus. Functionally, may be involved in cell cycle regulation by chromatin remodeling. This Mus musculus (Mouse) protein is RCC1 and BTB domain-containing protein 1 (Rcbtb1).